The following is a 90-amino-acid chain: Delta-aiptatoxin-Adi1a (90 aa).

A signal peptide spans Met-1 to Ser-21. A propeptide spanning residues Ser-22–Ile-44 is cleaved from the precursor. Intrachain disulfides connect Cys-50/Cys-86, Cys-52/Cys-77, and Cys-70/Cys-87.

This sequence belongs to the sea anemone sodium channel inhibitory toxin family.

It localises to the secreted. The protein resides in the nematocyst. Its function is as follows. Cardioactive peptide that acts on voltage-gated sodium channels (hNav1.5/SCN5A) and voltage-gated potassium channels (Kv). The activity on sodium channels consists of inhibition on sodium current inactivation with no significant effect on current activation. This effect may be caused by direct interaction of the toxin with sodium channel site-3. The activity on potassium channels consists of a significant increase of the amplitude of the transient component of the potassium current, shifting the current threshold to more negative membrane potentials. These effects are concentration-dependent and reversible and may be due to a direct interaction between the toxin and the voltage-sensing domain of the channel. Physiologically, this toxin increases the amplitude of cardiomyocyte contraction and slows the late phase of the twitch relaxation velocity with no induction of spontaneous twitching. It increases action potential duration of cardiomyocytes with no effect on its threshold and on the cell resting potential. On insects, it shows neurotoxic activity to the blowfly larvae S.falculaty, causing an immediate spasm that progressed to body contraction and paralysis. The polypeptide is Delta-aiptatoxin-Adi1a (Exaiptasia diaphana (Tropical sea anemone)).